A 213-amino-acid polypeptide reads, in one-letter code: Probable nicotinate-nucleotide adenylyltransferase (213 aa).

This sequence belongs to the NadD family.

It catalyses the reaction nicotinate beta-D-ribonucleotide + ATP + H(+) = deamido-NAD(+) + diphosphate. It functions in the pathway cofactor biosynthesis; NAD(+) biosynthesis; deamido-NAD(+) from nicotinate D-ribonucleotide: step 1/1. Functionally, catalyzes the reversible adenylation of nicotinate mononucleotide (NaMN) to nicotinic acid adenine dinucleotide (NaAD). This chain is Probable nicotinate-nucleotide adenylyltransferase, found in Trichlorobacter lovleyi (strain ATCC BAA-1151 / DSM 17278 / SZ) (Geobacter lovleyi).